We begin with the raw amino-acid sequence, 488 residues long: Diacylglycerol kinase 3 (488 aa).

Residues 1-24 are disordered; the sequence is MDSPVSKTDASKEKFVASRPSTAD. One can recognise a DAGKc domain in the interval 87–245; that stretch reads APHAPMVVFI…SWKILVSMPS (159 aa).

It belongs to the eukaryotic diacylglycerol kinase family. As to quaternary structure, monomer.

It carries out the reaction a 1,2-diacyl-sn-glycerol + ATP = a 1,2-diacyl-sn-glycero-3-phosphate + ADP + H(+). Phosphorylates the second messenger diacylglycerol (DAG) to generate phosphatidic acid (PA), another important signaling molecule. PA is required for plant development and responses to abiotic stress and pathogen attack. May be involved in the accumulation of PA during cold stress. The polypeptide is Diacylglycerol kinase 3 (DGK3) (Arabidopsis thaliana (Mouse-ear cress)).